A 508-amino-acid polypeptide reads, in one-letter code: E3 ubiquitin-protein ligase XBAT32 (508 aa).

ANK repeat units lie at residues 50-79 (VRNS…DINL), 83-112 (RGQT…NIHR), 117-147 (NGGT…SVPN), 177-206 (GGIT…SVTQ), and 220-249 (AGST…CLAA). The RING-type zinc-finger motif lies at 321 to 372 (CAVCLERKCTVAADGCAHEFCTNCALYLSTTSITSSKTSNVTPGSVPCPLCR).

Interacts with ACS4 and ACS7. As to expression, expressed in the vascular system of primary root, vascular tissue of leaves, stems and anthers.

The enzyme catalyses S-ubiquitinyl-[E2 ubiquitin-conjugating enzyme]-L-cysteine + [acceptor protein]-L-lysine = [E2 ubiquitin-conjugating enzyme]-L-cysteine + N(6)-ubiquitinyl-[acceptor protein]-L-lysine.. It functions in the pathway protein modification; protein ubiquitination. In terms of biological role, E3 ubiquitin-protein ligase that mediates ubiquitination of ACC synthases (ACS). Negatively regulates ethylene biosynthesis probably via ubiquitin-dependent degradation of ACS4 and ACS7 enzymes. Regulates lateral root formation and development by controlling ethylene production which inhibits lateral root formation at high concentration. This chain is E3 ubiquitin-protein ligase XBAT32 (XBAT32), found in Arabidopsis thaliana (Mouse-ear cress).